A 92-amino-acid polypeptide reads, in one-letter code: Progonadoliberin-1 (92 aa).

A signal peptide spans Met1 to Gly23. Pyrrolidone carboxylic acid is present on Gln24. Gly33 is subject to Glycine amide.

It belongs to the GnRH family. Post-translationally, the precursor is cleaved by ACE, which removes the Gly-Lys-Arg peptide at the C-terminus, leading to mature hormone. The mature form of Gonadoliberin-1 is also cleaved and degraded by ACE.

The protein resides in the secreted. Functionally, stimulates the secretion of gonadotropins; it stimulates the secretion of both luteinizing and follicle-stimulating hormones. This Cavia porcellus (Guinea pig) protein is Progonadoliberin-1 (GNRH1).